The chain runs to 512 residues: Cytochrome P450 26B1 (512 aa).

Position 441 (Cys441) interacts with heme.

It belongs to the cytochrome P450 family. Heme is required as a cofactor.

The protein resides in the endoplasmic reticulum membrane. Its subcellular location is the microsome membrane. The catalysed reaction is all-trans-retinoate + reduced [NADPH--hemoprotein reductase] + O2 = all-trans-4-hydroxyretinoate + oxidized [NADPH--hemoprotein reductase] + H2O + H(+). It carries out the reaction all-trans-retinoate + reduced [NADPH--hemoprotein reductase] + O2 = all-trans-18-hydroxyretinoate + oxidized [NADPH--hemoprotein reductase] + H2O + H(+). In terms of biological role, a cytochrome P450 monooxygenase involved in the metabolism of retinoates (RAs), the active metabolites of vitamin A, and critical signaling molecules in animals. RAs exist as at least four different isomers: all-trans-RA (atRA), 9-cis-RA, 13-cis-RA, and 9,13-dicis-RA, where atRA is considered to be the biologically active isomer, although 9-cis-RA and 13-cis-RA also have activity. Catalyzes the hydroxylation of atRA primarily at C-4 and C-18, thereby contributing to the regulation of atRA homeostasis and signaling. Hydroxylation of atRA limits its biological activity and initiates a degradative process leading to its eventual elimination. Involved in the convertion of atRA to all-trans-4-oxo-RA. Can oxidize all-trans-13,14-dihydroretinoate (DRA) to metabolites which could include all-trans-4-oxo-DRA, all-trans-4-hydroxy-DRA, all-trans-5,8-epoxy-DRA, and all-trans-18-hydroxy-DRA. Shows preference for the following substrates: atRA &gt; 9-cis-RA &gt; 13-cis-RA. Plays a central role in germ cell development: acts by degrading RAs in the developing testis, preventing STRA8 expression, thereby leading to delay of meiosis. Required for the maintenance of the undifferentiated state of male germ cells during embryonic development in Sertoli cells, inducing arrest in G0 phase of the cell cycle and preventing meiotic entry. Plays a role in skeletal development, both at the level of patterning and in the ossification of bone and the establishment of some synovial joints. Essential for postnatal survival. Functionally, also has a significant activity in oxidation of tazarotenic acid and may therefore metabolize that xenobiotic in vivo. This Mus musculus (Mouse) protein is Cytochrome P450 26B1 (Cyp26b1).